The following is a 339-amino-acid chain: Phenylalanine--tRNA ligase alpha subunit (339 aa).

E254 provides a ligand contact to Mg(2+).

It belongs to the class-II aminoacyl-tRNA synthetase family. Phe-tRNA synthetase alpha subunit type 1 subfamily. In terms of assembly, tetramer of two alpha and two beta subunits. Mg(2+) is required as a cofactor.

The protein resides in the cytoplasm. It carries out the reaction tRNA(Phe) + L-phenylalanine + ATP = L-phenylalanyl-tRNA(Phe) + AMP + diphosphate + H(+). This chain is Phenylalanine--tRNA ligase alpha subunit, found in Clostridium kluyveri (strain ATCC 8527 / DSM 555 / NBRC 12016 / NCIMB 10680 / K1).